Here is an 894-residue protein sequence, read N- to C-terminus: LRR receptor-like serine/threonine-protein kinase IOS1 (894 aa).

An N-terminal signal peptide occupies residues 1–23 (MAFSSCFLLVLLQIFSALLLCLA). Residues 24–515 (QDQSGFISLD…KKKKNTVIAP (492 aa)) lie on the Extracellular side of the membrane. 14 N-linked (GlcNAc...) asparagine glycosylation sites follow: Asn48, Asn95, Asn137, Asn179, Asn223, Asn230, Asn260, Asn287, Asn309, Asn338, Asn399, Asn441, Asn462, and Asn469. 2 LRR repeats span residues 431 to 457 (LTSL…NMET) and 459 to 479 (KLIN…LLDK). The chain crosses the membrane as a helical span at residues 516 to 536 (VAASLVSVFLIGAGIVTFLIL). Residues 537–894 (KRKKRTKLGL…FTTELNPGAR (358 aa)) are Cytoplasmic-facing. Thr577 is subject to Phosphothreonine. The Protein kinase domain occupies 586 to 858 (NNFERVLGRG…QVVMDLKECL (273 aa)). ATP contacts are provided by residues 592–600 (LGRGGFGVV) and Lys613. Tyr658 bears the Phosphotyrosine mark. Asp710 functions as the Proton acceptor in the catalytic mechanism. Ser744 is modified (phosphoserine). Phosphothreonine occurs at positions 745 and 750. Tyr758 carries the phosphotyrosine modification.

The protein belongs to the protein kinase superfamily. Ser/Thr protein kinase family. Homodimerization. Interacts with BAK1 and FLS2; triggers FLS2-BAK1 complex formation upon microbe-associated molecular patterns (MAMPs) treatment. Also binds to CERK1 and EFR. As to expression, expressed in roots, cotyledons, leaves, flowers and siliques.

It is found in the cell membrane. Its function is as follows. Negatively regulates the abscisic acid (ABA) signaling pathway. Required for full susceptibility to filamentous (hemi)biotrophic oomycetes (e.g. H.arabidopsidis and P.parasitica) and fungal (e.g. E.cruciferarum) pathogens, probably by triggering the repression of ABA-sensitive COLD REGULATED and RESISTANCE TO DESICCATION genes during infection, but independently of immune responses. Involved in BAK1-dependent and BAK1-independent microbe-associated molecular patterns (MAMPs)-triggered immunity (PTI) leading to defense responses, including callose deposition and MAPK cascade activation, toward pathogenic bacteria (e.g. P.syringae). Required for chitin-mediated PTI. The sequence is that of LRR receptor-like serine/threonine-protein kinase IOS1 from Arabidopsis thaliana (Mouse-ear cress).